The following is a 175-amino-acid chain: MSNSTPLPSSFDGDTDFYEENRWQKLTRRLKEEPLIPLGCILTSLALVGASRSIRAGDHNRTQRMFRARIYAQGFTLLAMVAGSMYWDSDRKKRKEFEGVLAETKAKEKNEAWIRELEARDEEEKEMRRARDERRRRAEGRPAPKAVVTDAPAEEGEKPKGGVMEQMSGLVWGKK.

In terms of domain architecture, HIG1 spans 7 to 98; sequence LPSSFDGDTD…SDRKKRKEFE (92 aa). The next 2 membrane-spanning stretches (helical) occupy residues 35-57 and 70-87; these read LIPL…IRAG and IYAQ…SMYW. Residues 106–139 adopt a coiled-coil conformation; it reads AKEKNEAWIRELEARDEEEKEMRRARDERRRRAE. The tract at residues 118–175 is disordered; it reads EARDEEEKEMRRARDERRRRAEGRPAPKAVVTDAPAEEGEKPKGGVMEQMSGLVWGKK. The segment covering 125-142 has biased composition (basic and acidic residues); the sequence is KEMRRARDERRRRAEGRP.

Belongs to the RCF1 family. As to quaternary structure, associates with the respiratory chain complex III/complex IV supercomplex.

The protein resides in the mitochondrion membrane. Cytochrome c oxidase subunit which plays a role in assembly of respiratory supercomplexes. This chain is Respiratory supercomplex factor 1, mitochondrial (rcf1), found in Botryotinia fuckeliana (strain B05.10) (Noble rot fungus).